Consider the following 218-residue polypeptide: NAD(P)H-quinone oxidoreductase subunit I (218 aa).

4Fe-4S ferredoxin-type domains are found at residues 55–84 (GRIHYEFDKCIACEVCVRVCPINLPVVDWV) and 95–124 (RNYSIDFGACIFCGNCVEYCPTNCLSMTEE). Residues cysteine 64, cysteine 67, cysteine 70, cysteine 74, cysteine 104, cysteine 107, cysteine 110, and cysteine 114 each coordinate [4Fe-4S] cluster. The interval 169–218 (MDPHELPANQQRAGKLPSQIIKELQAEKSEEKGNNNSSDIVPNKLNSTNK) is disordered. The span at 192–201 (LQAEKSEEKG) shows a compositional bias: basic and acidic residues. The segment covering 202 to 218 (NNNSSDIVPNKLNSTNK) has biased composition (polar residues).

This sequence belongs to the complex I 23 kDa subunit family. NDH-1 is composed of at least 11 different subunits. [4Fe-4S] cluster serves as cofactor.

The protein localises to the cellular thylakoid membrane. The catalysed reaction is a plastoquinone + NADH + (n+1) H(+)(in) = a plastoquinol + NAD(+) + n H(+)(out). It carries out the reaction a plastoquinone + NADPH + (n+1) H(+)(in) = a plastoquinol + NADP(+) + n H(+)(out). In terms of biological role, NDH-1 shuttles electrons from an unknown electron donor, via FMN and iron-sulfur (Fe-S) centers, to quinones in the respiratory and/or the photosynthetic chain. The immediate electron acceptor for the enzyme in this species is believed to be plastoquinone. Couples the redox reaction to proton translocation, and thus conserves the redox energy in a proton gradient. This Prochlorococcus marinus (strain NATL1A) protein is NAD(P)H-quinone oxidoreductase subunit I.